A 351-amino-acid polypeptide reads, in one-letter code: UDP-N-acetylglucosamine--N-acetylmuramyl-(pentapeptide) pyrophosphoryl-undecaprenol N-acetylglucosamine transferase (351 aa).

Residues T13 to G15, N125, R161, S189, I241, A260 to E265, and Q285 contribute to the UDP-N-acetyl-alpha-D-glucosamine site.

Belongs to the glycosyltransferase 28 family. MurG subfamily.

Its subcellular location is the cell inner membrane. The enzyme catalyses di-trans,octa-cis-undecaprenyl diphospho-N-acetyl-alpha-D-muramoyl-L-alanyl-D-glutamyl-meso-2,6-diaminopimeloyl-D-alanyl-D-alanine + UDP-N-acetyl-alpha-D-glucosamine = di-trans,octa-cis-undecaprenyl diphospho-[N-acetyl-alpha-D-glucosaminyl-(1-&gt;4)]-N-acetyl-alpha-D-muramoyl-L-alanyl-D-glutamyl-meso-2,6-diaminopimeloyl-D-alanyl-D-alanine + UDP + H(+). Its pathway is cell wall biogenesis; peptidoglycan biosynthesis. Functionally, cell wall formation. Catalyzes the transfer of a GlcNAc subunit on undecaprenyl-pyrophosphoryl-MurNAc-pentapeptide (lipid intermediate I) to form undecaprenyl-pyrophosphoryl-MurNAc-(pentapeptide)GlcNAc (lipid intermediate II). The chain is UDP-N-acetylglucosamine--N-acetylmuramyl-(pentapeptide) pyrophosphoryl-undecaprenol N-acetylglucosamine transferase from Haemophilus influenzae (strain ATCC 51907 / DSM 11121 / KW20 / Rd).